The following is a 221-amino-acid chain: MIIAIDGPSASGKSSIARELGVRLNYKFISSGHLYRIITLIAQRSLMNSCDFISEDSLLNLILENDISFNNSTFLLNGENVENQILNDKIDFQVSFYSSYVGIRNIVNKKLREVVKFSDDNYIIEGRDITTVVFPESEFKIYLDASVKVRALRRYKQRNGNETLEELERTLKRRDDVDKKKQYGKLKLSKGVFYLDTSYKGLDDVCNIIIEKFNLKKVRER.

7-15 (GPSASGKSS) contributes to the ATP binding site.

This sequence belongs to the cytidylate kinase family. Type 1 subfamily.

The protein localises to the cytoplasm. The catalysed reaction is CMP + ATP = CDP + ADP. It catalyses the reaction dCMP + ATP = dCDP + ADP. This chain is Cytidylate kinase, found in Borreliella burgdorferi (strain ZS7) (Borrelia burgdorferi).